Reading from the N-terminus, the 217-residue chain is UPF0319 protein VP1009 (217 aa).

The first 21 residues, 1-21 (MRLKTWIVAFFLGLFGTTVNA), serve as a signal peptide directing secretion.

This sequence belongs to the UPF0319 family.

The chain is UPF0319 protein VP1009 from Vibrio parahaemolyticus serotype O3:K6 (strain RIMD 2210633).